Consider the following 811-residue polypeptide: Zinc finger protein 839 (811 aa).

A C2H2-type zinc finger spans residues 197 to 222 (FKCQTCEKSYIGKGGLARHFKLNPGH). 3 disordered regions span residues 329 to 349 (QRRA…RASP), 455 to 555 (PDNL…NGSV), and 612 to 654 (ALEH…AEAG). Basic and acidic residues predominate over residues 476–485 (SSEKREREAA). A compositionally biased stretch (polar residues) spans 501–510 (SNDTTESLAA).

The protein is Zinc finger protein 839 (ZNF839) of Homo sapiens (Human).